A 645-amino-acid chain; its full sequence is Macrolide export ATP-binding/permease protein MacB (645 aa).

One can recognise an ABC transporter domain in the interval 6–244 (IELKDVTRYY…EAPQYRYARK (239 aa)). 42-49 (GQSGSGKS) provides a ligand contact to ATP. Transmembrane regions (helical) follow at residues 271 to 291 (ALTL…LAIG), 520 to 540 (FSIL…IGVM), 577 to 597 (VVGG…VFII), and 608 to 628 (PLPA…FGLL).

The protein belongs to the ABC transporter superfamily. Macrolide exporter (TC 3.A.1.122) family. As to quaternary structure, homodimer.

It localises to the cell inner membrane. Functionally, non-canonical ABC transporter that contains transmembrane domains (TMD), which form a pore in the inner membrane, and an ATP-binding domain (NBD), which is responsible for energy generation. Confers resistance against macrolides. In Hyphomonas neptunium (strain ATCC 15444), this protein is Macrolide export ATP-binding/permease protein MacB.